A 1956-amino-acid chain; its full sequence is Sodium channel protein type 10 subunit alpha (1956 aa).

The Cytoplasmic portion of the chain corresponds to 1–125 (MEFPIGSLET…FNLIRRTAIK (125 aa)). The disordered stretch occupies residues 27–54 (QIAAKQGTKKAREKHREQKDQEEKPRPQ). The span at 40-54 (KHREQKDQEEKPRPQ) shows a compositional bias: basic and acidic residues. One copy of the I repeat lies at 116-405 (FNLIRRTAIK…VTMAYEEQNQ (290 aa)). A helical membrane pass occupies residues 126–149 (VSVHSWFSLFITVTILVNCVCMTR). Residues 150-154 (TDLPE) are Extracellular-facing. The chain crosses the membrane as a helical span at residues 155–174 (KIEYVFTVIYTFEALIKILA). The Cytoplasmic segment spans residues 175 to 187 (RGFCLNEFTYLRD). The helical transmembrane segment at 188 to 206 (PWNWLDFSVITLAYVGTAI) threads the bilayer. Topologically, residues 207–212 (DLRGIS) are extracellular. Residues 213 to 232 (GLRTFRVLRALKTVSVIPGL) traverse the membrane as a helical; Voltage-sensor segment. The Cytoplasmic segment spans residues 233–248 (KVIVGALIHSVKKLAD). The chain crosses the membrane as a helical span at residues 249 to 272 (VTILTIFCLSVFALVGLQLFKGNL). Over 273–341 (KNKCVKNDMA…PDFNYTSFDS (69 aa)) the chain is Extracellular. Cys-276 and Cys-319 are disulfide-bonded. Residues Asn-284, Asn-288, Asn-312, and Asn-335 are each glycosylated (N-linked (GlcNAc...) asparagine). Positions 342 to 366 (FAWAFLSLFRLMTQDSWERLYQQTL) form an intramembrane region, pore-forming. Residues 367–373 (RTSGKIY) lie on the Extracellular side of the membrane. A helical transmembrane segment spans residues 374-399 (MIFFVLVIFLGSFYLVNLILAVVTMA). The Cytoplasmic segment spans residues 400 to 659 (YEEQNQATTD…MWVKLKTILF (260 aa)). Residues Ser-441, Ser-444, Ser-467, and Ser-479 each carry the phosphoserine modification. Over residues 443-454 (HSHNGSPLTSKN) the composition is skewed to polar residues. 2 disordered regions span residues 443 to 485 (HSHN…YNQR) and 500 to 580 (SHGS…LAPG). Over residues 561 to 570 (DSRHGEDEHQ) the composition is skewed to basic and acidic residues. Residues Ser-612 and Ser-615 each carry the phosphoserine modification. The stretch at 647-911 (CCPMWVKLKT…EDDGEVNNLQ (265 aa)) is one II repeat. A helical membrane pass occupies residues 660 to 684 (GLVTDPFAELTITLCIVVNTIFMAM). The Extracellular segment spans residues 685 to 695 (EHHGMSPTFEA). A helical membrane pass occupies residues 696 to 719 (MLQIGNIVFTIFFTAEMVFKIIAF). The Cytoplasmic segment spans residues 720–727 (DPYYYFQK). Residues 728-747 (KWNIFDCIIVTVSLLELGVA) form a helical membrane-spanning segment. Topologically, residues 748–753 (KKGSLS) are extracellular. Residues 754–773 (VLRSFRLLRVFKLAKSWPTL) form a helical; Voltage-sensor membrane-spanning segment. Residues 774 to 789 (NTLIKIIGNSVGALGN) lie on the Cytoplasmic side of the membrane. A helical transmembrane segment spans residues 790–810 (LTIILAIIVFVFALVGKQLLG). The Extracellular segment spans residues 811–834 (ENYRNNRKNISAPHEDWPRWHMHD). Asn-819 carries N-linked (GlcNAc...) asparagine glycosylation. Residues 835 to 855 (FFHSFLIVFRILCGEWIENMW) constitute an intramembrane region (pore-forming). The Extracellular portion of the chain corresponds to 856 to 864 (ACMEVGQKS). A disulfide bond links Cys-857 and Cys-866. The chain crosses the membrane as a helical span at residues 865–890 (ICLILFLTVMVLGNLVVLNLFIALLL). Topologically, residues 891–1147 (NSFSADNLTA…GWQVRKTCYR (257 aa)) are cytoplasmic. Disordered stretches follow at residues 963 to 986 (AANT…EHSD) and 1041 to 1089 (DHLT…GSTV). The stretch at 1140 to 1449 (QVRKTCYRIV…KKYYNAMKKL (310 aa)) is one III repeat. Residues 1148 to 1171 (IVEHSWFESFIIFMILLSSGSLAF) form a helical membrane-spanning segment. The Extracellular portion of the chain corresponds to 1172–1184 (EDYYLDQKPTVKA). A helical membrane pass occupies residues 1185–1210 (LLEYTDRVFTFIFVFEMLLKWVAYGF). Topologically, residues 1211 to 1216 (KKYFTN) are cytoplasmic. The chain crosses the membrane as a helical span at residues 1217-1238 (AWCWLDFLIVNISLISLTAKIL). Over 1239-1242 (EYSE) the chain is Extracellular. A helical; Voltage-sensor membrane pass occupies residues 1243–1264 (VAPIKALRTLRALRPLRALSRF). Residues 1265–1283 (EGMRVVVDALVGAIPSIMN) are Cytoplasmic-facing. Residues 1284-1311 (VLLVCLIFWLIFSIMGVNLFAGKFWRCI) form a helical membrane-spanning segment. Residues Asn-1312, Asn-1328, and Asn-1336 are each glycosylated (N-linked (GlcNAc...) asparagine). Topologically, residues 1312–1353 (NYTDGEFSLVPLSIVNNKSDCKIQNSTGSFFWVNVKVNFDNV) are extracellular. Residues 1354-1375 (AMGYLALLQVATFKGWMDIMYA) constitute an intramembrane region (pore-forming). Over 1376–1391 (AVDSREVNMQPKWEDN) the chain is Extracellular. The chain crosses the membrane as a helical span at residues 1392–1418 (VYMYLYFVIFIIFGGFFTLNLFVGVII). The Cytoplasmic portion of the chain corresponds to 1419–1471 (DNFNQQKKKLGGQDIFMTEEQKKYYNAMKKLGSKKPQKPIPRPLNKFQGFVFD). Position 1451 is a phosphoserine; by PKC (Ser-1451). One copy of the IV repeat lies at 1458 to 1757 (IPRPLNKFQG…WEKFDPEATQ (300 aa)). Residues 1472-1495 (IVTRQAFDITIMVLICLNMITMMV) form a helical membrane-spanning segment. Residues 1496–1506 (ETDDQSEEKTK) lie on the Extracellular side of the membrane. Residues 1507–1530 (ILGKINQFFVAVFTGECVMKMFAL) form a helical membrane-spanning segment. The Cytoplasmic segment spans residues 1531–1536 (RQYYFT). A helical transmembrane segment spans residues 1537 to 1560 (NGWNVFDFIVVVLSIASLIFSAIL). The Extracellular portion of the chain corresponds to 1561–1572 (KSLQSYFSPTLF). Residues 1573-1594 (RVIRLARIGRILRLIRAAKGIR) form a helical; Voltage-sensor membrane-spanning segment. At 1595-1609 (TLLFALMMSLPALFN) the chain is on the cytoplasmic side. Residues 1610–1632 (IGLLLFLVMFIYSIFGMSSFPHV) traverse the membrane as a helical segment. The Extracellular portion of the chain corresponds to 1633–1646 (RWEAGIDDMFNFQT). The pore-forming intramembrane region spans 1647–1669 (FANSMLCLFQITTSAGWDGLLSP). At 1670–1697 (ILNTGPPYCDPNLPNSNGTRGDCGSPAV) the chain is on the extracellular side. An N-linked (GlcNAc...) asparagine glycan is attached at Asn-1686. Residues 1698–1722 (GIIFFTTYIIISFLIMVNMYIAVIL) form a helical membrane-spanning segment. Residues 1723–1956 (ENFNVATEES…TSMELIAPGP (234 aa)) lie on the Cytoplasmic side of the membrane. The region spanning 1851-1880 (EDISATVIQKAYRSYVLHRSMALSNTPCVP) is the IQ domain. Positions 1909–1956 (SETASATSFPPSYESVTRGLSDRVNMRTSSSIQNEDEATSMELIAPGP) are disordered.

It belongs to the sodium channel (TC 1.A.1.10) family. Nav1.8/SCN10A subfamily. As to quaternary structure, the channel consists of an ion conducting pore forming alpha-subunit regulated by one or more associated auxiliary subunits SCN1B, SCN2B and SCN3B; electrophysiological properties may vary depending on the type of the associated beta subunits. Found in a number of complexes with PRX, DYNLT1 and PDZD2. Interacts with proteins such as FSTL1, PRX, DYNLT1, PDZD2, S100A10 and many others. Interacts with NEDD4 and NEDD4L. Post-translationally, ubiquitinated by NEDD4L; which promotes its endocytosis. Phosphorylation at Ser-1451 by PKC in a highly conserved cytoplasmic loop slows inactivation of the sodium channel and reduces peak sodium currents. In terms of processing, lacks the cysteine which covalently binds the conotoxin GVIIJ. This cysteine (position 816) is speculated in other sodium channel subunits alpha to be implied in covalent binding with the sodium channel subunit beta-2 or beta-4. Expressed in the dorsal root ganglia and sciatic nerve.

It is found in the cell membrane. It catalyses the reaction Na(+)(in) = Na(+)(out). Tetrodotoxin-resistant channel that mediates the voltage-dependent sodium ion permeability of excitable membranes. Assuming opened or closed conformations in response to the voltage difference across the membrane, the protein forms a sodium-selective channel through which sodium ions may pass in accordance with their electrochemical gradient. Plays a role in neuropathic pain mechanisms. This chain is Sodium channel protein type 10 subunit alpha, found in Homo sapiens (Human).